The primary structure comprises 227 residues: MEALKKLAGVTAAQYVTDGMTIGLGTGSTAYYFVEEIGRRIKEEGLQVVGVTTSSVTTKQAEGLGIPLTSIDDIDCIDLTVDGADEVDKAFNGIKGGGAALLMEKIVATPTKEYIWVVDESKLVDHLGAFKLPVEVVQYGADRLFRVFERAGYKPSFRMKGDKRLITDMQNFIIDLDLGCIENPFDFGRLLDQTVGVVEHGLFNGMVDKVIVAGQAGVTVLEANQST.

Substrate-binding positions include 26–29 (TGST), 82–85 (DGAD), and 95–98 (KGGG). Catalysis depends on E104, which acts as the Proton acceptor. K122 provides a ligand contact to substrate.

The protein belongs to the ribose 5-phosphate isomerase family. In terms of assembly, homodimer.

The catalysed reaction is aldehydo-D-ribose 5-phosphate = D-ribulose 5-phosphate. The protein operates within carbohydrate degradation; pentose phosphate pathway; D-ribose 5-phosphate from D-ribulose 5-phosphate (non-oxidative stage): step 1/1. Its function is as follows. Catalyzes the reversible conversion of ribose-5-phosphate to ribulose 5-phosphate. The chain is Ribose-5-phosphate isomerase A from Streptococcus equi subsp. zooepidemicus (strain H70).